The sequence spans 165 residues: Nucleotide-binding protein P9215_05621 (165 aa).

The protein belongs to the YajQ family.

Its function is as follows. Nucleotide-binding protein. The sequence is that of Nucleotide-binding protein P9215_05621 from Prochlorococcus marinus (strain MIT 9215).